Reading from the N-terminus, the 178-residue chain is Dual-action ribosomal maturation protein DarP (178 aa).

This sequence belongs to the DarP family.

The protein localises to the cytoplasm. Member of a network of 50S ribosomal subunit biogenesis factors which assembles along the 30S-50S interface, preventing incorrect 23S rRNA structures from forming. Promotes peptidyl transferase center (PTC) maturation. The polypeptide is Dual-action ribosomal maturation protein DarP (Haemophilus influenzae (strain PittEE)).